The sequence spans 398 residues: uncharacterized protein (398 aa).

An N-terminal signal peptide occupies residues 1–21; it reads MRKVGITLSVVALVIMGFVAG. Position 22 is an N-acetylcysteine (Cys-22). Cys-22 carries S-archaeol cysteine lipidation.

Belongs to the BMP lipoprotein family.

Its subcellular location is the cell membrane. This is an uncharacterized protein from Pyrococcus furiosus (strain ATCC 43587 / DSM 3638 / JCM 8422 / Vc1).